The sequence spans 349 residues: Aspartate carbamoyltransferase catalytic subunit (349 aa).

Residues Arg59 and Thr60 each contribute to the carbamoyl phosphate site. Lys87 contributes to the L-aspartate binding site. Positions 109, 142, and 145 each coordinate carbamoyl phosphate. L-aspartate contacts are provided by Arg182 and Arg253. Carbamoyl phosphate contacts are provided by Gly294 and Pro295.

The protein belongs to the aspartate/ornithine carbamoyltransferase superfamily. ATCase family. Heterododecamer (2C3:3R2) of six catalytic PyrB chains organized as two trimers (C3), and six regulatory PyrI chains organized as three dimers (R2).

It carries out the reaction carbamoyl phosphate + L-aspartate = N-carbamoyl-L-aspartate + phosphate + H(+). The protein operates within pyrimidine metabolism; UMP biosynthesis via de novo pathway; (S)-dihydroorotate from bicarbonate: step 2/3. Catalyzes the condensation of carbamoyl phosphate and aspartate to form carbamoyl aspartate and inorganic phosphate, the committed step in the de novo pyrimidine nucleotide biosynthesis pathway. The chain is Aspartate carbamoyltransferase catalytic subunit from Synechococcus sp. (strain CC9605).